Consider the following 430-residue polypeptide: Enolase (430 aa).

Residue Q164 participates in (2R)-2-phosphoglycerate binding. The active-site Proton donor is E206. Mg(2+) contacts are provided by D243, E286, and D313. The (2R)-2-phosphoglycerate site is built by K338, R367, S368, and K389. Catalysis depends on K338, which acts as the Proton acceptor.

Belongs to the enolase family. In terms of assembly, component of the RNA degradosome, a multiprotein complex involved in RNA processing and mRNA degradation. The cofactor is Mg(2+).

It is found in the cytoplasm. It localises to the secreted. Its subcellular location is the cell surface. It catalyses the reaction (2R)-2-phosphoglycerate = phosphoenolpyruvate + H2O. It functions in the pathway carbohydrate degradation; glycolysis; pyruvate from D-glyceraldehyde 3-phosphate: step 4/5. Catalyzes the reversible conversion of 2-phosphoglycerate (2-PG) into phosphoenolpyruvate (PEP). It is essential for the degradation of carbohydrates via glycolysis. This Dichelobacter nodosus (strain VCS1703A) protein is Enolase.